The primary structure comprises 422 residues: Phytoene synthase 1, chloroplastic (422 aa).

Residues 1 to 70 (MSSSVAVLWV…NRSRRIGVVS (70 aa)) constitute a chloroplast transit peptide.

Belongs to the phytoene/squalene synthase family. As to quaternary structure, monomer. Interacts with OR. Interacts with ORLIKE.

The protein resides in the plastid. The protein localises to the chloroplast membrane. The catalysed reaction is 2 (2E,6E,10E)-geranylgeranyl diphosphate = 15-cis-phytoene + 2 diphosphate. The protein operates within carotenoid biosynthesis; phytoene biosynthesis; all-trans-phytoene from geranylgeranyl diphosphate: step 1/1. Its function is as follows. Catalyzes the reaction from prephytoene diphosphate to phytoene. The chain is Phytoene synthase 1, chloroplastic from Arabidopsis thaliana (Mouse-ear cress).